The following is a 338-amino-acid chain: 1-aminocyclopropane-1-carboxylate deaminase (338 aa).

An N6-(pyridoxal phosphate)lysine modification is found at K51. The active-site Nucleophile is S78.

This sequence belongs to the ACC deaminase/D-cysteine desulfhydrase family. In terms of assembly, homotrimer. It depends on pyridoxal 5'-phosphate as a cofactor.

The enzyme catalyses 1-aminocyclopropane-1-carboxylate + H2O = 2-oxobutanoate + NH4(+). In terms of biological role, catalyzes a cyclopropane ring-opening reaction, the irreversible conversion of 1-aminocyclopropane-1-carboxylate (ACC) to ammonia and alpha-ketobutyrate. Allows growth on ACC as a nitrogen source. The chain is 1-aminocyclopropane-1-carboxylate deaminase from Paraburkholderia xenovorans (strain LB400).